We begin with the raw amino-acid sequence, 341 residues long: Coiled-coil domain-containing protein 86 (341 aa).

A disordered region spans residues 1–341 (MGTPLRRSRR…QPPQRPVAKV (341 aa)). Ser-18 carries the phosphoserine modification. Over residues 26-49 (EVSRAKRALVDFKSNPEETRELES) the composition is skewed to basic and acidic residues. Ser-59 bears the Phosphoserine mark. Residues 64 to 73 (PETSPESPCP) show a composition bias toward low complexity. Thr-66 is modified (phosphothreonine). 7 positions are modified to phosphoserine: Ser-67, Ser-70, Ser-81, Ser-92, Ser-103, Ser-114, and Ser-124. Polar residues predominate over residues 105 to 114 (AGQTESNPES). Residues 130 to 139 (EVAHAKEEVI) show a composition bias toward basic and acidic residues. Residues Ser-142, Ser-169, Ser-170, and Ser-200 each carry the phosphoserine modification. A compositionally biased stretch (basic residues) spans 219–235 (GKPKSGRVWKDRSKKRF). Basic and acidic residues predominate over residues 254–298 (ERQERKLAKDFARHLEEEKQRRRQEKKERRAENLRRRLENERKAE). Residues 261–304 (AKDFARHLEEEKQRRRQEKKERRAENLRRRLENERKAEIVQVIR) are a coiled coil. Over residues 307–317 (AKLKKAKKKQL) the composition is skewed to basic residues. Arg-323 is subject to Citrulline.

Post-translationally, citrullinated by PADI4.

Its subcellular location is the nucleus. The protein resides in the chromosome. It is found in the nucleolus. Required for proper chromosome segregation during mitosis and error-free mitotic progression. This chain is Coiled-coil domain-containing protein 86, found in Rattus norvegicus (Rat).